A 192-amino-acid polypeptide reads, in one-letter code: MNNANFEKYVDLVFEANKNFNLTGFKTKEAIYQNLVIEILTLFKGYEKFFIDKTVADLGSGNGSPGIILKLLFQKIKKLVLIDSKHKKISFLNKLTKQLNLEKTVAICERIEVHKNHYDVICSRGLSTIIKVNDLAFSLLNSKGIIFHIKQSLDQYIEFEKSNQKNQFNLLFIKHFTSQNKKLILIALQKND.

S-adenosyl-L-methionine-binding positions include Gly-59, 111-112, and Arg-124; that span reads IE.

It belongs to the methyltransferase superfamily. RNA methyltransferase RsmG family.

It localises to the cytoplasm. Its function is as follows. Specifically methylates the N7 position of a guanine in 16S rRNA. The polypeptide is Ribosomal RNA small subunit methyltransferase G (Mycoplasma genitalium (strain ATCC 33530 / DSM 19775 / NCTC 10195 / G37) (Mycoplasmoides genitalium)).